We begin with the raw amino-acid sequence, 443 residues long: MASELTNRRHEIEQPEAESYYPKPIKPWFVAIRPIRYMLREQRLVFVLVGIAIATLGFTIFSKSSNHQPIPYDVDPLSGYGMRSESSYLPATIHKKPSIEYMSRIGSAGGKIPLGLKRKVLRVVVTGGAGFVGSHLVDRLMARGDNVIVVDNFFTGRKENVMHHFNNPNFEMIRHDVVEPILLEVDQIYHLACPASPVHYKFNPVKTIKTNVVGTLNMLGLAKRVGARFLLTSTSEVYGDPLQHPQVETYWGNVNPIGVRSCYDEGKRTAETLTMDYHRGANVEVRIARIFNTYGPRMCIDDGRVVSNFVAQALRKEPLTVYGDGKQTRSFQFVSDLVEGLMRLMEGEHVGPFNLGNPGEFTMLELAKVVQETIDPNAKIEFRPNTEDDPHKRKPDITKAKELLGWEPKVALRQGLPLMVKDFRQRVFGDQKQDSSTTSSSTE.

At A2 the chain carries N-acetylalanine. Residues 2–43 (ASELTNRRHEIEQPEAESYYPKPIKPWFVAIRPIRYMLREQR) lie on the Cytoplasmic side of the membrane. Residues 44–64 (LVFVLVGIAIATLGFTIFSKS) traverse the membrane as a helical; Signal-anchor for type II membrane protein segment. Over 65 to 443 (SNHQPIPYDV…DSSTTSSSTE (379 aa)) the chain is Lumenal. Position 151–176 (151–176 (DNFFTGRKENVMHHFNNPNFEMIRHD)) interacts with NAD(+). R260 provides a ligand contact to substrate. The active-site Proton acceptor is the Y263. 263 to 267 (YDEGK) contacts NAD(+). Residue N292 participates in substrate binding. R304 is an NAD(+) binding site. Residues 305–309 (VVSNF), 322–329 (YGDGKQTR), and 389–393 (DPHKR) each bind substrate.

Belongs to the NAD(P)-dependent epimerase/dehydratase family. UDP-glucuronic acid decarboxylase subfamily. NAD(+) is required as a cofactor.

It localises to the golgi apparatus. Its subcellular location is the golgi stack membrane. It carries out the reaction UDP-alpha-D-glucuronate + H(+) = UDP-alpha-D-xylose + CO2. It participates in nucleotide-sugar biosynthesis; UDP-alpha-D-xylose biosynthesis; UDP-alpha-D-xylose from UDP-alpha-D-glucuronate: step 1/1. Catalyzes the NAD-dependent decarboxylation of UDP-glucuronic acid to UDP-xylose. Necessary for the biosynthesis of the core tetrasaccharide in glycosaminoglycan biosynthesis. The chain is UDP-glucuronic acid decarboxylase 4 (UXS4) from Arabidopsis thaliana (Mouse-ear cress).